The following is a 381-amino-acid chain: L-lactate dehydrogenase (381 aa).

The 380-residue stretch at 1 to 380 (MIISASTDYR…TRDSLVRELG (380 aa)) folds into the FMN hydroxy acid dehydrogenase domain. Position 24 (Tyr-24) interacts with substrate. Ser-106 and Gln-127 together coordinate FMN. A substrate-binding site is contributed by Tyr-129. An FMN-binding site is contributed by Thr-155. Arg-164 contributes to the substrate binding site. Lys-251 lines the FMN pocket. His-275 acts as the Proton acceptor in catalysis. Position 278 (Arg-278) interacts with substrate. 306–330 (DSGIRSGLDVVRMIALGADTVLIGR) contacts FMN.

This sequence belongs to the FMN-dependent alpha-hydroxy acid dehydrogenase family. As to quaternary structure, homotetramer. It depends on FMN as a cofactor.

The protein localises to the cell inner membrane. It carries out the reaction (S)-lactate + A = pyruvate + AH2. In terms of biological role, catalyzes the conversion of L-lactate to pyruvate. Is coupled to the respiratory chain. The polypeptide is L-lactate dehydrogenase (Pseudomonas putida (strain ATCC 700007 / DSM 6899 / JCM 31910 / BCRC 17059 / LMG 24140 / F1)).